The primary structure comprises 199 residues: Holliday junction resolvase RecU (199 aa).

Mg(2+) is bound by residues T82, D84, E97, and Q116.

The protein belongs to the RecU family. Mg(2+) is required as a cofactor.

It localises to the cytoplasm. It catalyses the reaction Endonucleolytic cleavage at a junction such as a reciprocal single-stranded crossover between two homologous DNA duplexes (Holliday junction).. Endonuclease that resolves Holliday junction intermediates in genetic recombination. Cleaves mobile four-strand junctions by introducing symmetrical nicks in paired strands. Promotes annealing of linear ssDNA with homologous dsDNA. Required for DNA repair, homologous recombination and chromosome segregation. This is Holliday junction resolvase RecU from Streptococcus agalactiae serotype Ia (strain ATCC 27591 / A909 / CDC SS700).